A 721-amino-acid polypeptide reads, in one-letter code: Polyribonucleotide nucleotidyltransferase (721 aa).

Mg(2+) is bound by residues Asp495 and Asp501. Residues 562-621 form the KH domain; the sequence is PRLLSFRIDPELIGTVIGPGGRTIKGITERTNTKIDIEDSGIVTIASHDGAAAEEAQKII. The S1 motif domain maps to 631-699; the sequence is GEMFSGSITR…NRGRINLTLR (69 aa). The tract at residues 700-721 is disordered; the sequence is GVPQSGESTEVEPQPTPVAPLS.

Belongs to the polyribonucleotide nucleotidyltransferase family. Requires Mg(2+) as cofactor.

The protein localises to the cytoplasm. It carries out the reaction RNA(n+1) + phosphate = RNA(n) + a ribonucleoside 5'-diphosphate. Involved in mRNA degradation. Catalyzes the phosphorolysis of single-stranded polyribonucleotides processively in the 3'- to 5'-direction. This is Polyribonucleotide nucleotidyltransferase from Synechococcus sp. (strain CC9902).